The following is a 147-amino-acid chain: uncharacterized protein (147 aa).

Positions 110 to 133 (VLEPPTPSQPAPTPEPAVKPQPIA) are disordered. Over residues 113–128 (PPTPSQPAPTPEPAVK) the composition is skewed to pro residues.

This is an uncharacterized protein from Ictalurid herpesvirus 1 (strain Auburn) (IcHV-1).